A 211-amino-acid chain; its full sequence is MRLTAKQVIWLKVCLHLAGLLPFLWLVWAINHGGLGADPVKDIQHFTGRTALKFLLAALLITPLARYAKQPLLIRTRRLLGLWCFAWATLHLTSYALLELGVNNLALLGKELITRPYLTLGIISWVILLALAFTSTQSMQRKLGKHWQQLHNFVYLVAILAPIHYLWSVKIISPQPLMYAGLAVLLLALRYKKLLSLFNRLRKQAHNKLSL.

5 helical membrane-spanning segments follow: residues Val-8–Trp-28, Phe-54–Ile-74, Leu-82–Val-102, Pro-116–Thr-136, and Phe-153–Ser-173.

The protein belongs to the MsrQ family. In terms of assembly, heterodimer of a catalytic subunit (MsrP) and a heme-binding subunit (MsrQ). The cofactor is FMN. Heme b is required as a cofactor.

It localises to the cell inner membrane. Its function is as follows. Part of the MsrPQ system that repairs oxidized periplasmic proteins containing methionine sulfoxide residues (Met-O), using respiratory chain electrons. Thus protects these proteins from oxidative-stress damage caused by reactive species of oxygen and chlorine generated by the host defense mechanisms. MsrPQ is essential for the maintenance of envelope integrity under bleach stress, rescuing a wide series of structurally unrelated periplasmic proteins from methionine oxidation, including the primary periplasmic chaperone SurA and the lipoprotein Pal. MsrQ provides electrons for reduction to the reductase catalytic subunit MsrP, using the quinone pool of the respiratory chain. The chain is Protein-methionine-sulfoxide reductase heme-binding subunit MsrQ from Escherichia coli O6:K15:H31 (strain 536 / UPEC).